Here is a 227-residue protein sequence, read N- to C-terminus: Ribose-5-phosphate isomerase A (227 aa).

Substrate contacts are provided by residues 26-29 (TGST), 82-85 (DGAD), and 95-98 (KGGG). Glutamate 104 serves as the catalytic Proton acceptor. Lysine 122 contacts substrate.

It belongs to the ribose 5-phosphate isomerase family. In terms of assembly, homodimer.

The catalysed reaction is aldehydo-D-ribose 5-phosphate = D-ribulose 5-phosphate. It functions in the pathway carbohydrate degradation; pentose phosphate pathway; D-ribose 5-phosphate from D-ribulose 5-phosphate (non-oxidative stage): step 1/1. Catalyzes the reversible conversion of ribose-5-phosphate to ribulose 5-phosphate. This Streptococcus pneumoniae serotype 4 (strain ATCC BAA-334 / TIGR4) protein is Ribose-5-phosphate isomerase A.